An 800-amino-acid polypeptide reads, in one-letter code: Fibroblast growth factor receptor 4 (800 aa).

The signal sequence occupies residues 1-16 (MWLLLALLSIFQETPA). Ig-like C2-type domains follow at residues 17-115 (FSLE…LIMD), 148-236 (PQRM…YLLD), and 245-345 (PILQ…AWLT). The Extracellular segment spans residues 17–367 (FSLEASEEME…TATSEARYTD (351 aa)). A disulfide bridge links C54 with C98. Residue N109 is glycosylated (N-linked (GlcNAc...) asparagine). Residues C168 and C220 are joined by a disulfide bond. N254, N286, and N307 each carry an N-linked (GlcNAc...) asparagine glycan. Residues C267 and C329 are joined by a disulfide bond. A helical transmembrane segment spans residues 368-388 (IILYVSGSLALVLLLLLAGVY). Topologically, residues 389-800 (HRQAIHGHHS…PFPFPEAQTT (412 aa)) are cytoplasmic. The region spanning 465–753 (LVLGKPLGEG…VLLAVSEEYL (289 aa)) is the Protein kinase domain. ATP is bound by residues 471 to 479 (LGEGCFGQV) and K501. Position 571 is a phosphoserine (S571). D610 (proton acceptor) is an active-site residue. Residues Y640, Y641, and Y752 each carry the phosphotyrosine; by autocatalysis modification. Residues 768-800 (DASSTCSSSDSVFSHDPLPLEPSPFPFPEAQTT) are disordered. Residues 770–781 (SSTCSSSDSVFS) show a composition bias toward low complexity.

The protein belongs to the protein kinase superfamily. Tyr protein kinase family. Fibroblast growth factor receptor subfamily. In terms of assembly, monomer. Homodimer after ligand binding. Interacts with FGF1, FGF2, FGF4, FGF6, FGF8, FGF9, FGF16, FGF17, FGF18, FGF19, FGF21 and FGF23 (in vitro). Binding affinity for FGF family members is enhanced by interactions between FGFs and heparan sulfate proteoglycans. Interacts with KLB; this strongly increases the affinity for FGF19 and FGF23. Affinity for FGF19 is strongly increased by KLB and sulfated glycosaminoglycans. KLB and KL both interact with the core-glycosylated FGFR4 in the endoplasmic reticulum and promote its degradation, so that only FGFR4 with fully mature N-glycans is expressed at the cell surface. Identified in a complex with NCAM1, CDH2, PLCG1, FRS2, SRC, SHC1, GAP43 and CTTN. Interacts with MMP14 and HIP1. Interacts with STAT3. In terms of processing, N-glycosylated. Full maturation of the glycan chains in the Golgi is essential for high affinity interaction with FGF19. Post-translationally, ubiquitinated. Subject to proteasomal degradation when not fully glycosylated. Autophosphorylated. Binding of FGF family members together with heparan sulfate proteoglycan or heparin promotes receptor dimerization and autophosphorylation on tyrosine residues. Autophosphorylation occurs in trans between the two FGFR molecules present in the dimer.

It is found in the cell membrane. Its subcellular location is the endosome. It localises to the endoplasmic reticulum. The catalysed reaction is L-tyrosyl-[protein] + ATP = O-phospho-L-tyrosyl-[protein] + ADP + H(+). Its activity is regulated as follows. Present in an inactive conformation in the absence of bound ligand. Ligand binding leads to dimerization and activation by autophosphorylation on tyrosine residues. Tyrosine-protein kinase that acts as a cell-surface receptor for fibroblast growth factors and plays a role in the regulation of cell proliferation, differentiation and migration, and in regulation of lipid metabolism, bile acid biosynthesis, glucose uptake, vitamin D metabolism and phosphate homeostasis. Required for normal down-regulation of the expression of CYP7A1, the rate-limiting enzyme in bile acid synthesis, in response to FGF19. Phosphorylates PLCG1 and FRS2. Ligand binding leads to the activation of several signaling cascades. Activation of PLCG1 leads to the production of the cellular signaling molecules diacylglycerol and inositol 1,4,5-trisphosphate. Phosphorylation of FRS2 triggers recruitment of GRB2, GAB1, PIK3R1 and SOS1, and mediates activation of RAS, MAPK1/ERK2, MAPK3/ERK1 and the MAP kinase signaling pathway, as well as of the AKT1 signaling pathway. Promotes SRC-dependent phosphorylation of the matrix protease MMP14 and its lysosomal degradation. FGFR4 signaling is down-regulated by receptor internalization and degradation; MMP14 promotes internalization and degradation of FGFR4. This is Fibroblast growth factor receptor 4 (Fgfr4) from Rattus norvegicus (Rat).